Here is an 82-residue protein sequence, read N- to C-terminus: Protein ImpC (82 aa).

Belongs to the DinI family.

The imp operon is involved in UV protection and mutation, however the ImpC protein is not essential for these functions. The polypeptide is Protein ImpC (impC) (Salmonella typhimurium).